Consider the following 382-residue polypeptide: MAP kinase-activated protein kinase 3 (382 aa).

N-acetylmethionine is present on Met1. The tract at residues 1–34 is disordered; it reads MDGETAEEQGGPVPPPVAPGGPGLGGAPGGRREP. Over residues 20–29 the composition is skewed to gly residues; that stretch reads GGPGLGGAPG. The region spanning 44-304 is the Protein kinase domain; it reads QLSKQVLGLG…ITQFMNHPWI (261 aa). ATP contacts are provided by residues 50–58 and Lys73; that span reads LGLGVNGKV. The active-site Proton acceptor is Asp166. Thr201 carries the phosphothreonine; by MAPK14 modification. Ser251 carries the phosphoserine; by MAPK14 modification. Ser307 bears the Phosphoserine; by autocatalysis mark. Residues 307–343 are autoinhibitory helix; the sequence is SMVVPQTPLHTARVLQEDKDHWDEVKEEMTSALATMR. Thr313 is subject to Phosphothreonine; by MAPK14. Positions 335–344 match the Nuclear export signal (NES) motif; sequence MTSALATMRV. Residues 345–369 are p38 MAPK-binding site; it reads DYDQVKIKDLKTSNNRLLNKRRKKQ. 2 consecutive short sequence motifs (bipartite nuclear localization signal) follow at residues 350-353 and 364-368; these read KIKD and KRRKK. The segment at 357 to 382 is disordered; it reads SNNRLLNKRRKKQAGSSSASQGCNNQ. The span at 370 to 382 shows a compositional bias: polar residues; it reads AGSSSASQGCNNQ.

The protein belongs to the protein kinase superfamily. CAMK Ser/Thr protein kinase family. Heterodimer with p38-alpha/MAPK14. The heterodimer with p38-alpha/MAPK14 forms a stable complex: molecules are positioned 'face to face' so that the ATP-binding sites of both kinases are at the heterodimer interface. Interacts with TCF3 and with polycomb proteins, such as PCH2 and BMI1/PCGF4. In terms of processing, phosphorylated and activated by MAPK1/ERK2 and MAPK3/ERK1. Phosphorylated and activated by MAP kinase p38-alpha/MAPK14 at Thr-201, Ser-251 and Thr-313. Widely expressed, with a higher expression level observed in heart and skeletal muscle. No expression in brain. Expressed in the retinal pigment epithelium.

The protein localises to the nucleus. The protein resides in the cytoplasm. The catalysed reaction is L-seryl-[protein] + ATP = O-phospho-L-seryl-[protein] + ADP + H(+). It catalyses the reaction L-threonyl-[protein] + ATP = O-phospho-L-threonyl-[protein] + ADP + H(+). Its activity is regulated as follows. Activated following phosphorylation by p38-alpha/MAPK14 following various stresses. Inhibited by ligand 5B (2'-[2-(1,3-benzodioxol-5-yl)pyrimidin-4-yl]-5',6'-dihydrospiro[piperidine-4,7'-pyrrolo[3,2-c]pyridin]- 4'(1'h)-one) and ligand P4O (2-[2-(2-fluorophenyl)pyridin-4-yl]-1,5,6,7-tetrahydro- 4h-pyrrolo[3,2-c]pyridin-4-one), 2 ATP-competitive inhibitors. Functionally, stress-activated serine/threonine-protein kinase involved in cytokines production, endocytosis, cell migration, chromatin remodeling and transcriptional regulation. Following stress, it is phosphorylated and activated by MAP kinase p38-alpha/MAPK14, leading to phosphorylation of substrates. Phosphorylates serine in the peptide sequence, Hyd-X-R-X(2)-S, where Hyd is a large hydrophobic residue. MAPKAPK2 and MAPKAPK3, share the same function and substrate specificity, but MAPKAPK3 kinase activity and level in protein expression are lower compared to MAPKAPK2. Phosphorylates HSP27/HSPB1, KRT18, KRT20, RCSD1, RPS6KA3, TAB3 and TTP/ZFP36. Mediates phosphorylation of HSP27/HSPB1 in response to stress, leading to dissociate HSP27/HSPB1 from large small heat-shock protein (sHsps) oligomers and impair their chaperone activities and ability to protect against oxidative stress effectively. Involved in inflammatory response by regulating tumor necrosis factor (TNF) and IL6 production post-transcriptionally: acts by phosphorylating AU-rich elements (AREs)-binding proteins, such as TTP/ZFP36, leading to regulate the stability and translation of TNF and IL6 mRNAs. Phosphorylation of TTP/ZFP36, a major post-transcriptional regulator of TNF, promotes its binding to 14-3-3 proteins and reduces its ARE mRNA affinity leading to inhibition of dependent degradation of ARE-containing transcript. Involved in toll-like receptor signaling pathway (TLR) in dendritic cells: required for acute TLR-induced macropinocytosis by phosphorylating and activating RPS6KA3. Also acts as a modulator of Polycomb-mediated repression. The chain is MAP kinase-activated protein kinase 3 (MAPKAPK3) from Homo sapiens (Human).